The following is a 445-amino-acid chain: Methionine aminopeptidase 2 (445 aa).

A disordered region spans residues 1–89; that stretch reads MAAQAPVDEI…DPPRVLISQL (89 aa). Positions 60-74 are enriched in basic residues; sequence AKKKKKRKPKKKKKN. Substrate is bound at residue His198. Residues Asp218, Asp229, and His298 each coordinate a divalent metal cation. His306 is a substrate binding site. A divalent metal cation-binding residues include Glu331 and Glu426.

This sequence belongs to the peptidase M24A family. Methionine aminopeptidase eukaryotic type 2 subfamily. Co(2+) is required as a cofactor. It depends on Zn(2+) as a cofactor. Mn(2+) serves as cofactor. Requires Fe(2+) as cofactor.

The protein localises to the cytoplasm. It carries out the reaction Release of N-terminal amino acids, preferentially methionine, from peptides and arylamides.. Cotranslationally removes the N-terminal methionine from nascent proteins. The N-terminal methionine is often cleaved when the second residue in the primary sequence is small and uncharged (Met-Ala-, Cys, Gly, Pro, Ser, Thr, or Val). In Podospora anserina (strain S / ATCC MYA-4624 / DSM 980 / FGSC 10383) (Pleurage anserina), this protein is Methionine aminopeptidase 2.